Reading from the N-terminus, the 65-residue chain is DNA-directed RNA polymerase subunit omega (65 aa).

The protein belongs to the RNA polymerase subunit omega family. In terms of assembly, the RNAP catalytic core consists of 2 alpha, 1 beta, 1 beta' and 1 omega subunit. When a sigma factor is associated with the core the holoenzyme is formed, which can initiate transcription.

The enzyme catalyses RNA(n) + a ribonucleoside 5'-triphosphate = RNA(n+1) + diphosphate. Its function is as follows. Promotes RNA polymerase assembly. Latches the N- and C-terminal regions of the beta' subunit thereby facilitating its interaction with the beta and alpha subunits. In Finegoldia magna (strain ATCC 29328 / DSM 20472 / WAL 2508) (Peptostreptococcus magnus), this protein is DNA-directed RNA polymerase subunit omega.